Here is a 354-residue protein sequence, read N- to C-terminus: Ribosomal RNA large subunit methyltransferase M (354 aa).

Residues S183, 216-219 (SPGG), D235, D255, and D271 each bind S-adenosyl-L-methionine. The Proton acceptor role is filled by K300.

Belongs to the class I-like SAM-binding methyltransferase superfamily. RNA methyltransferase RlmE family. RlmM subfamily. Monomer.

It is found in the cytoplasm. It catalyses the reaction cytidine(2498) in 23S rRNA + S-adenosyl-L-methionine = 2'-O-methylcytidine(2498) in 23S rRNA + S-adenosyl-L-homocysteine + H(+). Functionally, catalyzes the 2'-O-methylation at nucleotide C2498 in 23S rRNA. The protein is Ribosomal RNA large subunit methyltransferase M of Pseudomonas putida (strain GB-1).